The primary structure comprises 331 residues: Biotin synthase (331 aa).

The 226-residue stretch at 52-277 (PEVEVEGIVS…RTILRYAGGR (226 aa)) folds into the Radical SAM core domain. [4Fe-4S] cluster is bound by residues Cys-67, Cys-71, and Cys-74. The [2Fe-2S] cluster site is built by Cys-110, Cys-202, and Arg-272.

It belongs to the radical SAM superfamily. Biotin synthase family. As to quaternary structure, homodimer. [4Fe-4S] cluster is required as a cofactor. It depends on [2Fe-2S] cluster as a cofactor.

It carries out the reaction (4R,5S)-dethiobiotin + (sulfur carrier)-SH + 2 reduced [2Fe-2S]-[ferredoxin] + 2 S-adenosyl-L-methionine = (sulfur carrier)-H + biotin + 2 5'-deoxyadenosine + 2 L-methionine + 2 oxidized [2Fe-2S]-[ferredoxin]. It functions in the pathway cofactor biosynthesis; biotin biosynthesis; biotin from 7,8-diaminononanoate: step 2/2. Functionally, catalyzes the conversion of dethiobiotin (DTB) to biotin by the insertion of a sulfur atom into dethiobiotin via a radical-based mechanism. The polypeptide is Biotin synthase (Salinispora tropica (strain ATCC BAA-916 / DSM 44818 / JCM 13857 / NBRC 105044 / CNB-440)).